The chain runs to 228 residues: RNA chaperone ProQ (228 aa).

Residues 105 to 178 (EAKARVQAQR…REEQHTPVSD (74 aa)) are disordered. Composition is skewed to basic and acidic residues over residues 117-136 (QQAK…DAPR) and 146-173 (RRKE…EEQH).

Belongs to the ProQ family.

It localises to the cytoplasm. Its function is as follows. RNA chaperone with significant RNA binding, RNA strand exchange and RNA duplexing activities. May regulate ProP activity through an RNA-based, post-transcriptional mechanism. This chain is RNA chaperone ProQ, found in Citrobacter koseri (strain ATCC BAA-895 / CDC 4225-83 / SGSC4696).